The primary structure comprises 887 residues: Serine/threonine-protein kinase greatwall (887 aa).

One can recognise a Protein kinase domain in the interval 32–843; sequence FGIVKPISRG…LKDLKAHPLF (812 aa). ATP-binding positions include 38 to 46 and K61; that span reads ISRGAFGKV. D155 functions as the Proton acceptor in the catalytic mechanism. Phosphothreonine; by CDK1; in vitro is present on residues T221 and T244. The segment at 321–353 is disordered; the sequence is DAEAPPYFNSSRVKDSSSEQARSKKPTGSSASQ. Position 363 is a phosphoserine; by CDK1; in vitro (S363). The segment at 410-435 is disordered; sequence PKDFDKTGQGELGKFTSSPDSPPWLA. The residue at position 465 (S465) is a Phosphoserine; by CDK1; in vitro. The disordered stretch occupies residues 556–624; the sequence is RDGEVSSTSE…EITPDNKGIP (69 aa). Positions 575-587 are enriched in polar residues; sequence QDSSSTGMSVTEN. Residues 588–604 show a composition bias toward basic and acidic residues; that stretch reads QIDRDLSHVDKSIKELS. Residues 608 to 617 are compositionally biased toward acidic residues; the sequence is SQSENSEEIT. Residues S654 and S677 each carry the phosphoserine; by CDK1; in vitro modification. T748 carries the phosphothreonine; by CDK1 modification. The region spanning 844 to 887 is the AGC-kinase C-terminal domain; that stretch reads HGMEWEELQYQPMSFIPQPDDETDTTYFEARNNAQHLKVSGFSL.

Belongs to the protein kinase superfamily. AGC Ser/Thr protein kinase family. In terms of assembly, interacts with arpp19 and ensa, leading to their phosphorylation. Phosphorylation at Thr-748 by CDK1 during M phase activates its kinase activity. Not active during other phases of the cell cycle. Has the ability to autophosphorylate.

The protein localises to the cytoplasm. It is found in the cytoskeleton. It localises to the microtubule organizing center. Its subcellular location is the centrosome. The protein resides in the nucleus. It catalyses the reaction L-seryl-[protein] + ATP = O-phospho-L-seryl-[protein] + ADP + H(+). The catalysed reaction is L-threonyl-[protein] + ATP = O-phospho-L-threonyl-[protein] + ADP + H(+). Serine/threonine kinase that plays a key role in M phase by acting as a regulator of mitosis entry and maintenance. Acts by promoting the inactivation of protein phosphatase 2A (PP2A) during M phase: does not directly inhibit PP2A but acts by mediating phosphorylation and subsequent activation of arpp19 and ensa at 'Ser-67', 2 phosphatase inhibitors that specifically inhibit the ppp2r2d (PR55-delta) subunit of PP2A. Inactivation of PP2A during M phase is essential to keep cyclin-B1-CDK1 activity high. Following DNA damage, it is also involved in checkpoint recovery by being inhibited. The protein is Serine/threonine-protein kinase greatwall (mastl) of Xenopus laevis (African clawed frog).